Consider the following 372-residue polypeptide: MNPGIDLQGSFIELLTNVGLPPGVAKAVWMPLPMLLMLVGATIGVLISVWLERKISAAAQQRIGPEYIGPLGVLAPVADGLKLLFKEDIVPANADAALFTLGPILVVIPVFLSYLIVPFGQNLLISDLGIGVFLWISLSSIAPIGLLMAGYASNNKYSLLGGLRAAAQSISYEIPLALAVLAIAMMSNSLSTVDIVNQQSGLGILGWNVWRQPVGLILFWIAALAECERLPFDLPEAEEELVAGYQTEYAGMKFALFYLGSYVNLVLSALMVAILYLGGWDFPIPLNLVASWVGVSETNALFQVIAGAVGITMVLLKAYFFIFLAILLRWTVPRVRIDQLLDLGWKFLLPVGLVNLLLTAGLKLTFPIAFGG.

8 helical membrane passes run 27–47, 97–117, 128–148, 166–186, 204–224, 254–274, 308–328, and 351–371; these read AVWM…GVLI, ALFT…YLIV, LGIG…GLLM, AAQS…IAMM, ILGW…IAAL, FALF…MVAI, AVGI…AILL, and VGLV…IAFG.

The protein belongs to the complex I subunit 1 family. As to quaternary structure, NDH-1 is composed of at least 11 different subunits.

Its subcellular location is the cellular thylakoid membrane. It carries out the reaction a plastoquinone + NADH + (n+1) H(+)(in) = a plastoquinol + NAD(+) + n H(+)(out). The enzyme catalyses a plastoquinone + NADPH + (n+1) H(+)(in) = a plastoquinol + NADP(+) + n H(+)(out). NDH-1 shuttles electrons from an unknown electron donor, via FMN and iron-sulfur (Fe-S) centers, to quinones in the respiratory and/or the photosynthetic chain. The immediate electron acceptor for the enzyme in this species is believed to be plastoquinone. Couples the redox reaction to proton translocation, and thus conserves the redox energy in a proton gradient. This Cyanothece sp. (strain PCC 7425 / ATCC 29141) protein is NAD(P)H-quinone oxidoreductase subunit 1.